A 238-amino-acid chain; its full sequence is Phosphoribosylaminoimidazole-succinocarboxamide synthase (238 aa).

This sequence belongs to the SAICAR synthetase family.

The catalysed reaction is 5-amino-1-(5-phospho-D-ribosyl)imidazole-4-carboxylate + L-aspartate + ATP = (2S)-2-[5-amino-1-(5-phospho-beta-D-ribosyl)imidazole-4-carboxamido]succinate + ADP + phosphate + 2 H(+). It participates in purine metabolism; IMP biosynthesis via de novo pathway; 5-amino-1-(5-phospho-D-ribosyl)imidazole-4-carboxamide from 5-amino-1-(5-phospho-D-ribosyl)imidazole-4-carboxylate: step 1/2. This is Phosphoribosylaminoimidazole-succinocarboxamide synthase from Marinomonas sp. (strain MWYL1).